The following is a 123-amino-acid chain: Small ribosomal subunit protein uS12cz/uS12cy (123 aa).

The protein belongs to the universal ribosomal protein uS12 family. In terms of assembly, part of the 30S ribosomal subunit.

Its subcellular location is the plastid. The protein resides in the chloroplast. In terms of biological role, with S4 and S5 plays an important role in translational accuracy. Located at the interface of the 30S and 50S subunits. The chain is Small ribosomal subunit protein uS12cz/uS12cy (rps12-A) from Arabis hirsuta (Hairy rock-cress).